Reading from the N-terminus, the 321-residue chain is MGKAVIAIHGGAGAISRAQMSLQQELRYIEALSAIVETGQKMLEAGESALDVVTEAVRLLEECPLFNAGIGAVFTRDETHELDACVMDGNTLKAGAVAGVSHLRNPVLAARLVMEQSPHVMMIGEGAENFAFARGMERVSPEIFSTSLRYEQLLAARKEGATVLDHSGAPLDEKQKMGTVGAVALDLDGNLAAATSTGGMTNKLPGRVGDSPLVGAGCYANNASVAVSCTGTGEVFIRALAAYDIAALMDYGGLSLAEACERVVMEKLPALGGSGGLIAIDHEGNVALPFNTEGMYRAWGYAGDTPTTGIYREKGDTVATQ.

The active-site Nucleophile is the T179. Substrate-binding positions include 207–210 and 230–233; these read RVGD and TGTG.

It belongs to the Ntn-hydrolase family. Heterotetramer of two alpha and two beta chains arranged as a dimer of alpha/beta heterodimers. Post-translationally, autocleaved. Generates the alpha and beta subunits. The N-terminal residue of the beta subunit is thought to be responsible for the nucleophile hydrolase activity. Both subunits undergo further processing at their C-termini. The overexpressed alpha subunit seems to consist of residues 2-161, with an oxidized Met residue and a tightly coordinated Na(+), whereas the overexpressed beta subunit is processed to residue 315 and has 3 oxidized Met residues. Processing of the alpha subunit is inhibited by Zn(2+).

It catalyses the reaction Cleavage of a beta-linked Asp residue from the N-terminus of a polypeptide.. Degrades proteins damaged by L-isoaspartyl residue formation (also known as beta-Asp residues). Degrades L-isoaspartyl-containing di- and maybe also tripeptides. Also has L-asparaginase activity, although this may not be its principal function. In terms of biological role, may be involved in glutathione, and possibly other peptide, transport, although these results could also be due to polar effects of disruption. The chain is Isoaspartyl peptidase (iaaA) from Escherichia coli (strain K12).